Here is a 124-residue protein sequence, read N- to C-terminus: Small ribosomal subunit protein uS12 (124 aa).

The segment at 1–32 (MPTIQQLVRKGRQAKASKTKTPALKGSPQRRG) is disordered. Residues 9 to 18 (RKGRQAKASK) show a composition bias toward basic residues. Aspartate 89 is subject to 3-methylthioaspartic acid.

The protein belongs to the universal ribosomal protein uS12 family. In terms of assembly, part of the 30S ribosomal subunit. Contacts proteins S8 and S17. May interact with IF1 in the 30S initiation complex.

In terms of biological role, with S4 and S5 plays an important role in translational accuracy. Interacts with and stabilizes bases of the 16S rRNA that are involved in tRNA selection in the A site and with the mRNA backbone. Located at the interface of the 30S and 50S subunits, it traverses the body of the 30S subunit contacting proteins on the other side and probably holding the rRNA structure together. The combined cluster of proteins S8, S12 and S17 appears to hold together the shoulder and platform of the 30S subunit. This Acidothermus cellulolyticus (strain ATCC 43068 / DSM 8971 / 11B) protein is Small ribosomal subunit protein uS12.